A 407-amino-acid polypeptide reads, in one-letter code: Serine/threonine transporter SstT (407 aa).

A run of 9 helical transmembrane segments spans residues 12–32 (GNLIVQICIGIVLGILIGISS), 42–62 (LGILFTSALKAIAPMLVFILI), 81–101 (IIILYIVGTFLASACAVLANF), 141–161 (ALSSGNYLGILTWAIAGGIAL), 179–199 (VLKIVKFIVKLAPFGIFGLVA), 218–238 (ILLVATMLFVTFVINALIVFF), 245–267 (FPLIFICLRHSAFFAFFTRSSAA), 288–308 (ISIPLGATINMAGAAVTIAIL), and 330–350 (IIATFAACGASGVAGGSLLLI).

It belongs to the dicarboxylate/amino acid:cation symporter (DAACS) (TC 2.A.23) family.

Its subcellular location is the cell inner membrane. It carries out the reaction L-serine(in) + Na(+)(in) = L-serine(out) + Na(+)(out). The enzyme catalyses L-threonine(in) + Na(+)(in) = L-threonine(out) + Na(+)(out). Its function is as follows. Involved in the import of serine and threonine into the cell, with the concomitant import of sodium (symport system). In Campylobacter jejuni subsp. jejuni serotype O:23/36 (strain 81-176), this protein is Serine/threonine transporter SstT.